The following is a 312-amino-acid chain: Olfactory receptor 10P22 (312 aa).

Residues 1 to 26 (MGDDNDTDITEFILLGFSGYGFLQGH) lie on the Extracellular side of the membrane. A glycan (N-linked (GlcNAc...) asparagine) is linked at Asn-5. A helical membrane pass occupies residues 27-47 (LFWGVLCIYVVTLLGNSLIVL). Residues 48-57 (LTLADSALHS) lie on the Cytoplasmic side of the membrane. Residues 58–78 (PMYFFLRHFSVVEILYTTTIV) form a helical membrane-spanning segment. The Extracellular portion of the chain corresponds to 79–89 (PRMLADLRSSC). Residues 90-110 (PTIPLASCFTQLYFFALFGIA) traverse the membrane as a helical segment. The Cytoplasmic portion of the chain corresponds to 111–143 (ECCLLTAMAYDRYAAICCPLHYTTLMSQGTYTG). A helical transmembrane segment spans residues 144–164 (LVGASYLAGVISGTTHSIFIF). Over 165-205 (TLPFRGAKTIHHFLCDILPVLRLATASTFWGEVGNLFVTIT) the chain is Extracellular. A helical membrane pass occupies residues 206–226 (FIFVPFLLIVASYACILVTIL). The Cytoplasmic segment spans residues 227 to 236 (GVATSQGRQK). The chain crosses the membrane as a helical span at residues 237–257 (LFSTCSSHLFVVILFFGTATV). The Extracellular segment spans residues 258-271 (AYMRPQADSFGNTD). Residues 272–292 (QILTLVYTVVTPMCNPFVYSL) traverse the membrane as a helical segment. Residues 293-312 (RNKEVTGAMRRLMKRYLWGP) lie on the Cytoplasmic side of the membrane.

The protein belongs to the G-protein coupled receptor 1 family.

The protein resides in the cell membrane. Functionally, odorant receptor. This is Olfactory receptor 10P22 from Mus musculus (Mouse).